The chain runs to 214 residues: tRNA (guanine-N(7)-)-methyltransferase (214 aa).

S-adenosyl-L-methionine contacts are provided by Glu43, Glu68, Asp95, and Asp117. The active site involves Asp117. Residues Lys121, Asp153, and 190–193 (TEYE) each bind substrate.

This sequence belongs to the class I-like SAM-binding methyltransferase superfamily. TrmB family.

The catalysed reaction is guanosine(46) in tRNA + S-adenosyl-L-methionine = N(7)-methylguanosine(46) in tRNA + S-adenosyl-L-homocysteine. It participates in tRNA modification; N(7)-methylguanine-tRNA biosynthesis. Its function is as follows. Catalyzes the formation of N(7)-methylguanine at position 46 (m7G46) in tRNA. The sequence is that of tRNA (guanine-N(7)-)-methyltransferase from Staphylococcus aureus (strain Mu3 / ATCC 700698).